The primary structure comprises 295 residues: Autophagy-related protein 37 (295 aa).

The ACB domain occupies 5 to 103; the sequence is VDRVFVHALN…LIDTMHRYAT (99 aa). Disordered regions lie at residues 124 to 162 and 174 to 201; these read NSPS…PLKE and LRSQ…RWQR. The segment covering 125–153 has biased composition (low complexity); it reads SPSSSLSSPRPNQSTGAGAQQPQQEPEQA. N-linked (GlcNAc...) asparagine glycosylation occurs at Asn-136. The chain crosses the membrane as a helical span at residues 244 to 264; sequence WLLVKHIFADLVILSVVLLWL.

The protein belongs to the ATG37 family.

It localises to the peroxisome membrane. Acyl-CoA binding protein which acts as the peroxisome receptor for pexophagy. Required for both micropexophagy and macropexophagy, but not for the cytoplasm to vacuole transport (Cvt) or autophagy pathways. Required for functional micropexophagic apparatus (MIPA) and relocation of ATG11 to the peroxisome-sequestering arms of the vacuole. Binds palmitoyl-CoA but not oleyl-CoA. The sequence is that of Autophagy-related protein 37 from Gibberella zeae (strain ATCC MYA-4620 / CBS 123657 / FGSC 9075 / NRRL 31084 / PH-1) (Wheat head blight fungus).